The sequence spans 332 residues: Tryptophan--tRNA ligase (332 aa).

Residues 11-13 (QPS) and 19-20 (GN) contribute to the ATP site. The 'HIGH' region signature appears at 12–20 (PSGELTIGN). Aspartate 135 is an L-tryptophan binding site. ATP contacts are provided by residues 147 to 149 (GQD), valine 186, and 195 to 199 (KMSKS). Residues 195–199 (KMSKS) carry the 'KMSKS' region motif.

It belongs to the class-I aminoacyl-tRNA synthetase family. In terms of assembly, homodimer.

It is found in the cytoplasm. It catalyses the reaction tRNA(Trp) + L-tryptophan + ATP = L-tryptophyl-tRNA(Trp) + AMP + diphosphate + H(+). In terms of biological role, catalyzes the attachment of tryptophan to tRNA(Trp). This Shewanella oneidensis (strain ATCC 700550 / JCM 31522 / CIP 106686 / LMG 19005 / NCIMB 14063 / MR-1) protein is Tryptophan--tRNA ligase.